The following is a 105-amino-acid chain: Large ribosomal subunit protein uL24 (105 aa).

This sequence belongs to the universal ribosomal protein uL24 family. As to quaternary structure, part of the 50S ribosomal subunit.

Functionally, one of two assembly initiator proteins, it binds directly to the 5'-end of the 23S rRNA, where it nucleates assembly of the 50S subunit. Its function is as follows. One of the proteins that surrounds the polypeptide exit tunnel on the outside of the subunit. This Aeromonas hydrophila subsp. hydrophila (strain ATCC 7966 / DSM 30187 / BCRC 13018 / CCUG 14551 / JCM 1027 / KCTC 2358 / NCIMB 9240 / NCTC 8049) protein is Large ribosomal subunit protein uL24.